An 82-amino-acid polypeptide reads, in one-letter code: Small ribosomal subunit protein bS20 (82 aa).

The segment at 1-29 (MPNIKSAKKDLRRSRAAAVRNRAQRSALR) is disordered. The segment covering 16-29 (AAAVRNRAQRSALR) has biased composition (low complexity).

It belongs to the bacterial ribosomal protein bS20 family.

Its function is as follows. Binds directly to 16S ribosomal RNA. The protein is Small ribosomal subunit protein bS20 of Gemmatimonas aurantiaca (strain DSM 14586 / JCM 11422 / NBRC 100505 / T-27).